The following is a 231-amino-acid chain: Uracil-DNA glycosylase (231 aa).

Catalysis depends on Asp71, which acts as the Proton acceptor.

Belongs to the uracil-DNA glycosylase (UDG) superfamily. UNG family.

It is found in the cytoplasm. It carries out the reaction Hydrolyzes single-stranded DNA or mismatched double-stranded DNA and polynucleotides, releasing free uracil.. Its function is as follows. Excises uracil residues from the DNA which can arise as a result of misincorporation of dUMP residues by DNA polymerase or due to deamination of cytosine. This chain is Uracil-DNA glycosylase, found in Pseudomonas aeruginosa (strain ATCC 15692 / DSM 22644 / CIP 104116 / JCM 14847 / LMG 12228 / 1C / PRS 101 / PAO1).